Reading from the N-terminus, the 721-residue chain is MASFKGFSVNTVPVSKAKRDISSLAATPGIRSQPFTPSVDMSQSREFLTKAIEQGSMSIPYQHVNVPKVDRKVVSLVVRPFSSGAFSISGVISPAHAYLLDCLPQLEQAMAFVASPESFQASDVAKRFAIKPGMSLQDAITAFINFVSAMLKMTVTRQNFDVIVAEIERLASTSVSVRTEEAKVADEELMLFGLDHRGPQQLDISNAKGIMKAADIQATHDVHLAPGVGNIDPEIYNEGRFMFMQHKPLAADQSYFTLETADYFKIYPTYDEHDSRMADQKQSGLILCTKDEVLAEQTIFKLDAPDDKTVHLLDRDDDHVVARFTKVFIEDVAPGHHAAQRSGQRSVLDDLYANTQVVSITSAALKWVVKHGVSDGIVNRKNVKVCVGFDPLYTLSTHNGVSLCALLMDEKLSVLNSACRMTLRSLMKTGRDADAHRAFQRVLSQGYASLMCYYHPSRKLAYGEVLFLERSSDMVDGIKLQLDASRQCHECPVLQQKVVELEKQIIMQKSIQSDPTPMALQPLLSQLRELSSEVTRLQMELSRTQSLNAQLEADAKSAQACSLDMYLRHHTCINGHTKEDELLDAVRVAPDVRKEIMEKRGEVRRGWCERISKEAAAKCQTVIDDLTQMNGKQAREITELRESAENYEKQIAELVGTITQNQMTYQQELQALVAKNVELDTMNQRQAKSLRITPSLLSATPIDSVDGAADLIDFSVPTDEL.

Positions 1–13 (MASFKGFSVNTVP) are interaction with sigma-NS. The segment at 1 to 38 (MASFKGFSVNTVPVSKAKRDISSLAATPGIRSQPFTPS) is RNA-binding. The segment at 14 to 40 (VSKAKRDISSLAATPGIRSQPFTPSVD) is interaction with mu-2. An involved in the formation of factory-like inclusions region spans residues 471–721 (SSDMVDGIKL…IDFSVPTDEL (251 aa)). 2 coiled-coil regions span residues 523-560 (LLSQLRELSSEVTRLQMELSRTQSLNAQLEADAKSAQA) and 628-686 (QMNG…NQRQ).

This sequence belongs to the orthoreovirus mu-NS protein family. As to quaternary structure, interacts with mu-2. Interacts with sigma-NS; in viral factories. Interacts with the inner capsid proteins lambda-1 and sigma-2, and outer capsid protein lambda-2; in viral factories. In terms of processing, the N-terminus is blocked.

The protein resides in the host cytoplasm. Functionally, non-structural protein implicated with protein sigma-NS in forming the matrix of viral factories, which are large inclusions in the host cytoplasm where replication intermediates are assembled and viral RNA replication takes place. Together with mu-2, recruits the other core proteins to these factories. The chain is Protein mu-NS (M3) from Mammalia (T1L).